We begin with the raw amino-acid sequence, 502 residues long: ATP synthase subunit alpha (502 aa).

Residue 169–176 (GDRQTGKT) participates in ATP binding.

The protein belongs to the ATPase alpha/beta chains family. In terms of assembly, F-type ATPases have 2 components, CF(1) - the catalytic core - and CF(0) - the membrane proton channel. CF(1) has five subunits: alpha(3), beta(3), gamma(1), delta(1), epsilon(1). CF(0) has three main subunits: a(1), b(2) and c(9-12). The alpha and beta chains form an alternating ring which encloses part of the gamma chain. CF(1) is attached to CF(0) by a central stalk formed by the gamma and epsilon chains, while a peripheral stalk is formed by the delta and b chains.

Its subcellular location is the cell inner membrane. It catalyses the reaction ATP + H2O + 4 H(+)(in) = ADP + phosphate + 5 H(+)(out). In terms of biological role, produces ATP from ADP in the presence of a proton gradient across the membrane. The alpha chain is a regulatory subunit. This is ATP synthase subunit alpha from Desulfovibrio desulfuricans (strain ATCC 27774 / DSM 6949 / MB).